Here is a 2278-residue protein sequence, read N- to C-terminus: Protein Ycf2 (2278 aa).

The protein belongs to the Ycf2 family.

It is found in the plastid. Its subcellular location is the chloroplast stroma. It localises to the chromoplast stroma. Functionally, probable ATPase of unknown function. Its presence in a non-photosynthetic plant (Epifagus virginiana) and experiments in tobacco indicate that it has an essential function which is probably not related to photosynthesis. The sequence is that of Protein Ycf2 (ycf2-A) from Solanum lycopersicum (Tomato).